We begin with the raw amino-acid sequence, 200 residues long: ATP synthase subunit s, mitochondrial (200 aa).

The transit peptide at 1–25 (MMPFGKISQQLCGVKKLPWSCDSRY) directs the protein to the mitochondrion. The segment at 1–61 (MMPFGKISQQ…SEWLLRCGAM (61 aa)) is N-terminal domain. Position 59 (G59) interacts with Mg(2+). LRR repeat units lie at residues 62–87 (VRYH…KYKI), 88–116 (QAID…KIRL), 117–141 (CKCH…KTIL), and 142–173 (EMEI…LSDL). Mg(2+) is bound at residue T93.

Belongs to the ATP synthase subunit s family. In terms of assembly, homotetramer. Associates with ATP synthase.

Its subcellular location is the mitochondrion. The protein localises to the mitochondrion inner membrane. In terms of biological role, involved in regulation of mitochondrial membrane ATP synthase. Necessary for H(+) conduction of ATP synthase. Facilitates energy-driven catalysis of ATP synthesis by blocking a proton leak through an alternative proton exit pathway. This Homo sapiens (Human) protein is ATP synthase subunit s, mitochondrial.